Reading from the N-terminus, the 505-residue chain is Lysine--tRNA ligase (505 aa).

The Mg(2+) site is built by glutamate 415 and glutamate 422.

It belongs to the class-II aminoacyl-tRNA synthetase family. As to quaternary structure, homodimer. Mg(2+) serves as cofactor.

It is found in the cytoplasm. The catalysed reaction is tRNA(Lys) + L-lysine + ATP = L-lysyl-tRNA(Lys) + AMP + diphosphate. In Cronobacter sakazakii (strain ATCC BAA-894) (Enterobacter sakazakii), this protein is Lysine--tRNA ligase.